A 420-amino-acid chain; its full sequence is Light-independent protochlorophyllide reductase subunit N (420 aa).

Residues C21, C46, and C103 each contribute to the [4Fe-4S] cluster site.

The protein belongs to the BchN/ChlN family. As to quaternary structure, protochlorophyllide reductase is composed of three subunits; BchL, BchN and BchB. Forms a heterotetramer of two BchB and two BchN subunits. It depends on [4Fe-4S] cluster as a cofactor.

The catalysed reaction is chlorophyllide a + oxidized 2[4Fe-4S]-[ferredoxin] + 2 ADP + 2 phosphate = protochlorophyllide a + reduced 2[4Fe-4S]-[ferredoxin] + 2 ATP + 2 H2O. The protein operates within porphyrin-containing compound metabolism; bacteriochlorophyll biosynthesis (light-independent). Component of the dark-operative protochlorophyllide reductase (DPOR) that uses Mg-ATP and reduced ferredoxin to reduce ring D of protochlorophyllide (Pchlide) to form chlorophyllide a (Chlide). This reaction is light-independent. The NB-protein (BchN-BchB) is the catalytic component of the complex. The protein is Light-independent protochlorophyllide reductase subunit N of Chlorobium luteolum (strain DSM 273 / BCRC 81028 / 2530) (Pelodictyon luteolum).